The sequence spans 2957 residues: Toxin PAU_02230 (2957 aa).

Residues 949-968 (TSVSPAETAQSTPEPLSDFA) form a disordered region. Positions 2115 to 2144 (EWFKHSETGLKGGGPIDDIRKYIARKSAIK) are membrane localization domain that interacts with the inner leaflet of the plasma membrane. The interval 2115-2449 (EWFKHSETGL…TSTIVTPLAP (335 aa)) is tyrosine glycosyltransferase PaToxG. UDP-N-acetyl-alpha-D-glucosamine-binding positions include 2169–2171 (IWI) and 2259–2260 (SD). Residues Asp-2276 and Asp-2278 each contribute to the a divalent metal cation site. Positions 2276–2279 (DIDD) match the DxDD motif motif. Asn-2312 is a binding site for UDP-N-acetyl-alpha-D-glucosamine. A sseI-like deamidase PaToxD region spans residues 2450–2672 (KTEMLPPVPS…NYSVNPTAEN (223 aa)). Active-site for deamidase activity residues include Cys-2509, His-2547, and Asp-2562. The segment at 2667–2705 (NPTAENLSPPPPPPIPSHGQVPKTVTPPPPPMRSPLSLS) is disordered.

It depends on a divalent metal cation as a cofactor.

It is found in the secreted. It localises to the host cell membrane. It carries out the reaction L-tyrosyl-[protein] + UDP-N-acetyl-alpha-D-glucosamine = O-(N-acetyl-alpha-D-glucosaminyl)-L-tyrosyl-[protein] + UDP + H(+). It catalyses the reaction L-glutaminyl-[protein] + H2O = L-glutamyl-[protein] + NH4(+). Functionally, toxin that acts on host cells by modifying Rho proteins by tyrosine GlcNAcylation and heterotrimeric G alpha proteins by deamidation. Catalyzes the mono-O-GlcNAcylation of small GTPases of the Rho family (RhoA, RhoB, RhoC, Rac1, Rac2, Rac3, Cdc42) in eukaryotic host cells at the conserved tyrosine residue located in the switch I region (Tyr-32/34), using UDP-N-acetylglucosamine (UDP-GlcNAc) as the sugar donor; other GTPases of the Rho, Ras or Rab families are not substrates. Tyrosine glycosylation inhibits Rho activation and prevents interaction with downstream effectors, resulting in actin disassembly, inhibition of phagocytosis, cell rounding, and toxicity toward insects and mammalian cells. Also catalyzes the deamidation of the catalytic glutamine in heterotrimeric G alpha proteins (Gi, Gq/11), which blocks GTP hydrolysis and arrests the G proteins in a permanent active state leading to activation of Rho GTPases. Thus, PaTox hijacks host GTPase signaling in a bidirectional manner by deamidation-induced activation and glycosylation-induced inactivation of GTPases. The sequence is that of Toxin PAU_02230 from Photorhabdus asymbiotica subsp. asymbiotica (strain ATCC 43949 / 3105-77) (Xenorhabdus luminescens (strain 2)).